A 130-amino-acid polypeptide reads, in one-letter code: Fluoride-specific ion channel FluC (130 aa).

The next 4 helical transmembrane spans lie at 3 to 23, 38 to 58, 67 to 87, and 102 to 122; these read LVFL…YFVG, LGTF…GHLA, FGIF…SYGL, and ISYV…GWFL. Na(+) contacts are provided by G77 and T80.

It belongs to the fluoride channel Fluc/FEX (TC 1.A.43) family.

The protein localises to the cell inner membrane. The enzyme catalyses fluoride(in) = fluoride(out). With respect to regulation, na(+) is not transported, but it plays an essential structural role and its presence is essential for fluoride channel function. Functionally, fluoride-specific ion channel. Important for reducing fluoride concentration in the cell, thus reducing its toxicity. The sequence is that of Fluoride-specific ion channel FluC from Helicobacter pylori (strain J99 / ATCC 700824) (Campylobacter pylori J99).